The sequence spans 292 residues: Pantothenate synthetase (292 aa).

ATP is bound at residue 30–37 (MGALHEGH). His-37 functions as the Proton donor in the catalytic mechanism. Gln-61 contributes to the (R)-pantoate binding site. A beta-alanine-binding site is contributed by Gln-61. An ATP-binding site is contributed by 147-150 (GEKD). Gln-153 serves as a coordination point for (R)-pantoate. 184 to 187 (VSSR) serves as a coordination point for ATP.

The protein belongs to the pantothenate synthetase family. As to quaternary structure, homodimer.

It localises to the cytoplasm. It carries out the reaction (R)-pantoate + beta-alanine + ATP = (R)-pantothenate + AMP + diphosphate + H(+). The protein operates within cofactor biosynthesis; (R)-pantothenate biosynthesis; (R)-pantothenate from (R)-pantoate and beta-alanine: step 1/1. In terms of biological role, catalyzes the condensation of pantoate with beta-alanine in an ATP-dependent reaction via a pantoyl-adenylate intermediate. In Chlorobium phaeovibrioides (strain DSM 265 / 1930) (Prosthecochloris vibrioformis (strain DSM 265)), this protein is Pantothenate synthetase.